A 483-amino-acid polypeptide reads, in one-letter code: ATP-dependent RNA helicase DDX25 (483 aa).

A Phosphothreonine modification is found at Thr49. Positions 61–74 match the Nuclear export signal motif; sequence LAANSLLNKLIRQS. Residues 97 to 125 carry the Q motif motif; sequence KTFEELRLKEELLKGIYAMGFNRPSKIQE. Positions 100 to 114 match the Nuclear localization signal motif; it reads EELRLKEELLKGIYA. The Helicase ATP-binding domain maps to 130 to 300; it reads MMLAHPPQNL…ERIIPDPNVI (171 aa). 143 to 150 provides a ligand contact to ATP; sequence SQSGTGKT. Positions 247–250 match the DEAD box motif; the sequence is DEAD. Residues 311-478 form the Helicase C-terminal domain; that stretch reads NIRQYYVLCE…QLDPEDMDEI (168 aa).

The protein belongs to the DEAD box helicase family. Phosphorylated on threonine residues. The phosphorylated form is found in the cytoplasm but not in the nucleus. Isoform 1 is expressed in germ cells. Isoform 2 is highly expressed in Leydig cells and weakly expressed in the pituitary and hypothalamus. Isoform 3 is weakly expressed only in germ cells.

Its subcellular location is the cytoplasm. The protein resides in the nucleus. The enzyme catalyses ATP + H2O = ADP + phosphate + H(+). In terms of biological role, ATP-dependent RNA helicase. Required for mRNA export and translation regulation during spermatid development. This chain is ATP-dependent RNA helicase DDX25 (Ddx25), found in Rattus norvegicus (Rat).